A 131-amino-acid polypeptide reads, in one-letter code: Encapsulated ferritin-like protein (131 aa).

E30, E60, and H63 together coordinate Fe cation. The tract at residues 96–131 is disordered; that stretch reads EEEDTGSSSSVAASPTSAPSHGSLGIGSLRQEGKED. Residues 98–131 form a targeting peptide region; sequence EDTGSSSSVAASPTSAPSHGSLGIGSLRQEGKED. Residues 102-115 are compositionally biased toward low complexity; it reads SSSSVAASPTSAPS.

The protein belongs to the ferritin-like superfamily. EncFtn family. Forms dimers at all pH tested; under acidic conditions formes decamers. The N-terminal domain (residues 1-97) crystallizes as a decameric ring. Four decamers are loaded in the encapsulin nanocompartment in a tetrahedral arrangement. A 3 nm gap is consistently seen between the shell and the cargo. The target peptide extends away from the decameric ring, to allow binding to the interior of the encapsulin nanocompartment shell.

It is found in the encapsulin nanocompartment. The enzyme catalyses 4 Fe(2+) + O2 + 4 H(+) = 4 Fe(3+) + 2 H2O. With respect to regulation, the ferroxidase activity is inhibited by zinc. Its function is as follows. Cargo protein of a type 1 encapsulin nanocompartment. A ferritin-like ferroxidase that converts Fe(2+) to Fe(3+) iron inside the encapsulin nanocompartment. Mineralized Fe(3+) is released to the exterior of the decameric complex for deposition in the encapsulin nanocompartment. In solution the decamer binds 10-15 iron cations; in the encapsulin nanocompartment the decamer can bind up to 48 ions, perhaps via its internal channel, and on its exterior. The cargo-loaded nanocompartment maximally sequesters up to 4150 Fe ions. The polypeptide is Encapsulated ferritin-like protein (Haliangium ochraceum (strain DSM 14365 / JCM 11303 / SMP-2)).